The chain runs to 342 residues: Peptide chain release factor 1 (342 aa).

Gln211 carries the post-translational modification N5-methylglutamine. A disordered region spans residues 262–282; it reads KEREISQKRKSQIGTGERSEK.

The protein belongs to the prokaryotic/mitochondrial release factor family. Post-translationally, methylated by PrmC. Methylation increases the termination efficiency of RF1.

It localises to the cytoplasm. In terms of biological role, peptide chain release factor 1 directs the termination of translation in response to the peptide chain termination codons UAG and UAA. This is Peptide chain release factor 1 (prfA) from Thermotoga maritima (strain ATCC 43589 / DSM 3109 / JCM 10099 / NBRC 100826 / MSB8).